We begin with the raw amino-acid sequence, 350 residues long: MLEQLQTLKNEAETQINEASDLKTLNDLRVKYLGKKGPMTEIMKQMGKLSAEERPKMGSLANEVRTALTEAISSKQQILETEAINEKLKSETIDVTLPGTAPSIGTKHLLTQVIEEMEDMFIGMGYEIAEGPEVELDYYNFEALNLPKDHPARDMQDSFYITENTLLRTQTSPVQARTMEKHDFSKGPIKVICPGKVYRRDNDDATHSHQFTQIEGLVVGENITFADLKGTLTVLAKTMFGEEREIRLRPSFFPFTEPSVEMDISCFKCGGKGCRVCKGTGWIEILGSGMVHPNVLEMSRIDSTRYSGFAFGLGPERVAMLKYAVDDIRHLYTNDLRFTKQFQSTETGEI.

Glu257 serves as a coordination point for Mg(2+).

The protein belongs to the class-II aminoacyl-tRNA synthetase family. Phe-tRNA synthetase alpha subunit type 1 subfamily. In terms of assembly, tetramer of two alpha and two beta subunits. Mg(2+) serves as cofactor.

The protein resides in the cytoplasm. The catalysed reaction is tRNA(Phe) + L-phenylalanine + ATP = L-phenylalanyl-tRNA(Phe) + AMP + diphosphate + H(+). This chain is Phenylalanine--tRNA ligase alpha subunit, found in Listeria monocytogenes serotype 4b (strain CLIP80459).